A 412-amino-acid polypeptide reads, in one-letter code: DnaJ homolog subfamily A member 2 (412 aa).

In terms of domain architecture, J spans 8-70; it reads KLYDILGVPP…EKRELYDRYG (63 aa). K39 is subject to N6-acetyllysine. Residues S78 and S123 each carry the phosphoserine modification. The segment at 130–214 adopts a CR-type zinc-finger fold; that stretch reads GKTTKLQLSK…CEGKKVIKEV (85 aa). Residue K134 forms a Glycyl lysine isopeptide (Lys-Gly) (interchain with G-Cter in SUMO2) linkage. 2 residues coordinate Zn(2+): C143 and C146. Residues 143 to 150 form a CXXCXGXG motif repeat; the sequence is CSACSGQG. K152 is modified (N6-acetyllysine). 6 residues coordinate Zn(2+): C159, C162, C186, C189, C202, and C205. 3 CXXCXGXG motif repeats span residues 159 to 166, 186 to 193, and 202 to 209; these read CSACRGRG, CSDCNGEG, and CKKCEGKK. Positions 359 to 412 are disordered; that stretch reads PEVPNIIGDTEEVELQEFDSTRGSGGGQRREAYNDSSDEESSSHHGPGVQCAHQ. A Phosphotyrosine modification is found at Y391. Phosphoserine is present on residues S394 and S395. C409 bears the Cysteine methyl ester mark. A lipid anchor (S-farnesyl cysteine) is attached at C409. Positions 410–412 are cleaved as a propeptide — removed in mature form; the sequence is AHQ.

The protein localises to the membrane. In terms of biological role, co-chaperone of Hsc70. Stimulates ATP hydrolysis and the folding of unfolded proteins mediated by HSPA1A/B (in vitro). The chain is DnaJ homolog subfamily A member 2 (DNAJA2) from Bos taurus (Bovine).